A 341-amino-acid chain; its full sequence is GTPase Obg (341 aa).

One can recognise an Obg domain in the interval 1 to 159; sequence MKFVDEALIK…RNLRLELRVL (159 aa). Positions 128 to 150 are disordered; that stretch reads TRYKSSVNRSPRQTTPGSPGESR. The span at 129 to 144 shows a compositional bias: polar residues; sequence RYKSSVNRSPRQTTPG. The region spanning 160–334 is the OBG-type G domain; the sequence is ADVGLLGLPN…LCYALMQLID (175 aa). Residues 166-173, 191-195, 213-216, 283-286, and 315-317 each bind GTP; these read GLPNAGKS, FTTLH, DIPG, NKID, and SAI. Mg(2+) contacts are provided by S173 and T193.

This sequence belongs to the TRAFAC class OBG-HflX-like GTPase superfamily. OBG GTPase family. In terms of assembly, monomer. It depends on Mg(2+) as a cofactor.

Its subcellular location is the cytoplasm. An essential GTPase which binds GTP, GDP and possibly (p)ppGpp with moderate affinity, with high nucleotide exchange rates and a fairly low GTP hydrolysis rate. Plays a role in control of the cell cycle, stress response, ribosome biogenesis and in those bacteria that undergo differentiation, in morphogenesis control. This is GTPase Obg from Legionella pneumophila (strain Lens).